A 313-amino-acid chain; its full sequence is Probable cell division protein WhiA (313 aa).

A DNA-binding region (H-T-H motif) is located at residues 277–311 (SLKEVAAQVPDGPISKSGVNHRFQKIREMAQQLKE).

It belongs to the WhiA family.

In terms of biological role, involved in cell division and chromosome segregation. The polypeptide is Probable cell division protein WhiA (Lactobacillus gasseri (strain ATCC 33323 / DSM 20243 / BCRC 14619 / CIP 102991 / JCM 1131 / KCTC 3163 / NCIMB 11718 / NCTC 13722 / AM63)).